A 1253-amino-acid chain; its full sequence is Cytoplasmic FMR1-interacting protein 1 homolog (1253 aa).

The protein belongs to the CYFIP family.

It localises to the cytoplasm. The protein resides in the perinuclear region. The protein localises to the cell projection. It is found in the lamellipodium. Its subcellular location is the ruffle. It localises to the synapse. The protein resides in the synaptosome. In terms of biological role, involved in formation of membrane ruffles and lamellipodia protrusions and in axon outgrowth. Binds to F-actin but not to RNA. This is Cytoplasmic FMR1-interacting protein 1 homolog from Danio rerio (Zebrafish).